The following is a 381-amino-acid chain: L-lactate dehydrogenase (381 aa).

An FMN hydroxy acid dehydrogenase domain is found at 1 to 380 (MIISSTNDYR…TRDALVDLSK (380 aa)). Y24 contributes to the substrate binding site. Residues S106 and Q127 each contribute to the FMN site. A substrate-binding site is contributed by Y129. T155 serves as a coordination point for FMN. Residue R164 coordinates substrate. Residue K251 coordinates FMN. H275 functions as the Proton acceptor in the catalytic mechanism. R278 serves as a coordination point for substrate. FMN is bound at residue 306-330 (DSGIRNGLDIVRMLALGADATMLGR).

This sequence belongs to the FMN-dependent alpha-hydroxy acid dehydrogenase family. Requires FMN as cofactor.

It localises to the cell inner membrane. It catalyses the reaction (S)-lactate + A = pyruvate + AH2. Its function is as follows. Catalyzes the conversion of L-lactate to pyruvate. Is coupled to the respiratory chain. The chain is L-lactate dehydrogenase from Actinobacillus pleuropneumoniae serotype 3 (strain JL03).